The following is a 210-amino-acid chain: MTNLNYQQTHFVMSAPDIRHLPSDTGIEVAFAGRSNAGKSSALNTLTNQKSLARTSKTPGRTQLINLFEVADGKRLVDLPGYGYAEVPEEMKRKWQRALGEYLEKRQSLQGLVVLMDIRHPLKDLDQQMIEWAVDSNIAVLVLLTKADKLASGARKALLNMVREAVLAFNGDVQVETFSSLKKQGVDKLRQKLDTWFSEMQPVEETQDGE.

In terms of domain architecture, EngB-type G spans 25-199; the sequence is TGIEVAFAGR…RQKLDTWFSE (175 aa). Residues 33 to 40, 60 to 64, 78 to 81, 145 to 148, and 178 to 180 each bind GTP; these read GRSNAGKS, GRTQL, DLPG, TKAD, and FSS. Mg(2+)-binding residues include S40 and T62.

This sequence belongs to the TRAFAC class TrmE-Era-EngA-EngB-Septin-like GTPase superfamily. EngB GTPase family. Mg(2+) is required as a cofactor.

In terms of biological role, necessary for normal cell division and for the maintenance of normal septation. This chain is Probable GTP-binding protein EngB, found in Shigella flexneri.